The sequence spans 361 residues: Nicotinate-nucleotide--dimethylbenzimidazole phosphoribosyltransferase (361 aa).

The active-site Proton acceptor is the E315.

Belongs to the CobT family.

The catalysed reaction is 5,6-dimethylbenzimidazole + nicotinate beta-D-ribonucleotide = alpha-ribazole 5'-phosphate + nicotinate + H(+). It participates in nucleoside biosynthesis; alpha-ribazole biosynthesis; alpha-ribazole from 5,6-dimethylbenzimidazole: step 1/2. Its function is as follows. Catalyzes the synthesis of alpha-ribazole-5'-phosphate from nicotinate mononucleotide (NAMN) and 5,6-dimethylbenzimidazole (DMB). This Clostridium perfringens (strain 13 / Type A) protein is Nicotinate-nucleotide--dimethylbenzimidazole phosphoribosyltransferase.